Reading from the N-terminus, the 436-residue chain is GTPase Der (436 aa).

2 consecutive EngA-type G domains span residues 4–167 (PTVA…PVEE) and 175–351 (IRFS…ESQN). Residues 10 to 17 (GRPNVGKS), 57 to 61 (DTGGI), 119 to 122 (NKVD), 181 to 188 (GRPNVGKS), 229 to 233 (DTAGM), and 294 to 297 (NKWD) each bind GTP. The region spanning 352–436 (KRIPSAVLND…PIHLIARKRK (85 aa)) is the KH-like domain.

Belongs to the TRAFAC class TrmE-Era-EngA-EngB-Septin-like GTPase superfamily. EngA (Der) GTPase family. Associates with the 50S ribosomal subunit.

Functionally, GTPase that plays an essential role in the late steps of ribosome biogenesis. This chain is GTPase Der, found in Streptococcus pyogenes serotype M28 (strain MGAS6180).